Here is a 703-residue protein sequence, read N- to C-terminus: Glycine--tRNA ligase beta subunit (703 aa).

It belongs to the class-II aminoacyl-tRNA synthetase family. As to quaternary structure, tetramer of two alpha and two beta subunits.

The protein localises to the cytoplasm. It catalyses the reaction tRNA(Gly) + glycine + ATP = glycyl-tRNA(Gly) + AMP + diphosphate. This Myxococcus xanthus (strain DK1622) protein is Glycine--tRNA ligase beta subunit.